Reading from the N-terminus, the 84-residue chain is RNA-binding protein Hfq (84 aa).

Residues 11–71 (DTFLNHVRKN…ISTIMPGHPV (61 aa)) enclose the Sm domain.

The protein belongs to the Hfq family. Homohexamer.

In terms of biological role, RNA chaperone that binds small regulatory RNA (sRNAs) and mRNAs to facilitate mRNA translational regulation in response to envelope stress, environmental stress and changes in metabolite concentrations. Also binds with high specificity to tRNAs. The chain is RNA-binding protein Hfq from Methylorubrum populi (strain ATCC BAA-705 / NCIMB 13946 / BJ001) (Methylobacterium populi).